Reading from the N-terminus, the 382-residue chain is uncharacterized protein (382 aa).

A signal peptide spans 1–25 (MKKWMAAVFVMMLMLCFGGIENVKA). The active-site Nucleophile is Ser-186. Catalysis depends on residues Asp-354 and His-357.

This sequence belongs to the 'GDSL' lipolytic enzyme family.

This is an uncharacterized protein from Bacillus subtilis (strain 168).